Here is a 280-residue protein sequence, read N- to C-terminus: Shikimate dehydrogenase (NADP(+)) (280 aa).

Shikimate-binding positions include 20–22 and threonine 67; that span reads SRS. Lysine 71 functions as the Proton acceptor in the catalytic mechanism. Residue aspartate 82 participates in NADP(+) binding. Shikimate is bound by residues asparagine 91 and aspartate 106. NADP(+) is bound by residues 131 to 135 and leucine 220; that span reads GAGGS. Tyrosine 222 contacts shikimate. Residue glycine 243 participates in NADP(+) binding.

The protein belongs to the shikimate dehydrogenase family. Homodimer.

It carries out the reaction shikimate + NADP(+) = 3-dehydroshikimate + NADPH + H(+). Its pathway is metabolic intermediate biosynthesis; chorismate biosynthesis; chorismate from D-erythrose 4-phosphate and phosphoenolpyruvate: step 4/7. Its function is as follows. Involved in the biosynthesis of the chorismate, which leads to the biosynthesis of aromatic amino acids. Catalyzes the reversible NADPH linked reduction of 3-dehydroshikimate (DHSA) to yield shikimate (SA). The polypeptide is Shikimate dehydrogenase (NADP(+)) (Rhodopseudomonas palustris (strain HaA2)).